A 217-amino-acid chain; its full sequence is Adapter protein MecA (217 aa).

Belongs to the MecA family. Homodimer.

Enables the recognition and targeting of unfolded and aggregated proteins to the ClpC protease or to other proteins involved in proteolysis. The chain is Adapter protein MecA from Listeria monocytogenes serotype 4b (strain CLIP80459).